Consider the following 289-residue polypeptide: Oxaloacetate decarboxylase (289 aa).

Ser47 contacts substrate. Position 85 (Asp85) interacts with Mg(2+). Positions 156 and 232 each coordinate substrate.

The protein belongs to the isocitrate lyase/PEP mutase superfamily. Oxaloacetate decarboxylase family. As to quaternary structure, homotetramer; dimer of dimers. Mg(2+) is required as a cofactor.

It carries out the reaction oxaloacetate + H(+) = pyruvate + CO2. In terms of biological role, catalyzes the decarboxylation of oxaloacetate into pyruvate. Seems to play a role in maintaining cellular concentrations of bicarbonate and pyruvate. The protein is Oxaloacetate decarboxylase of Rhodopseudomonas palustris (strain HaA2).